Reading from the N-terminus, the 612-residue chain is Vitamin B12 transporter BtuB (612 aa).

The first 20 residues, 1 to 20 (MIKKSLLCTALSVTAFSGWA), serve as a signal peptide directing secretion. The short motif at 26 to 33 (DTLVVTAN) is the TonB box element. In terms of domain architecture, TBDR plug spans 38 to 152 (PRSAVLAPIT…IGGVVNIITT (115 aa)). Residues Ser85, Asn92, and 110–111 (VS) contribute to the cyanocob(III)alamin site. Residues 155 to 612 (KPGTELTAGV…EYTLSGSYTF (458 aa)) form the TBDR beta-barrel domain. The next 3 beta stranded transmembrane spans lie at 158–165 (TELTAGVG), 169–178 (YQNYDVSTQQ), and 184–195 (TRVTLMGDYAYT). Residues Asp199, Gln211, Asp213, and Asp215 each contribute to the Ca(2+) site. Beta stranded transmembrane passes span 217–227 (FLSKTLYGALE) and 232–248 (DTWS…NRTN). Ca(2+)-binding residues include Tyr249, Asp250, and Asp261. Transmembrane regions (beta stranded) follow at residues 263–277 (RKLY…LRFN), 279–296 (ELIQ…KDYN), 309–325 (TLDE…NSIV), 328–337 (HGNVGAGVDW), 353–369 (YDQR…QQLG), 371–381 (FTFEGAARSDD), 385–400 (FGRH…WEFI), 403–417 (YRFI…KAPN), 434–443 (QSKQWEGAFE), 449–458 (VNWRVSGYRN), 473–490 (YFNE…TANF), 494–509 (PLAH…SRNA), 517–529 (RRSK…QLDW), and 535–550 (DWGL…YDTD). Cyanocob(III)alamin is bound at residue Thr309. Residue Arg517 coordinates cyanocob(III)alamin. Position 551 (Tyr551) interacts with cyanocob(III)alamin. The next 3 membrane-spanning stretches (beta stranded) occupy residues 556–570 (PVKM…LAVS), 583–594 (IANRFDKDYETV), and 600–612 (AGRE…SYTF). The TonB C-terminal box signature appears at 595–612 (YGYATAGREYTLSGSYTF).

This sequence belongs to the TonB-dependent receptor family. BtuB (TC 1.B.14.3.1) subfamily.

It localises to the cell outer membrane. Involved in the active translocation of vitamin B12 (cyanocobalamin) across the outer membrane to the periplasmic space. It derives its energy for transport by interacting with the trans-periplasmic membrane protein TonB. This chain is Vitamin B12 transporter BtuB, found in Citrobacter freundii.